Consider the following 383-residue polypeptide: ATP phosphoribosyltransferase regulatory subunit (383 aa).

Belongs to the class-II aminoacyl-tRNA synthetase family. HisZ subfamily. In terms of assembly, heteromultimer composed of HisG and HisZ subunits.

Its subcellular location is the cytoplasm. It participates in amino-acid biosynthesis; L-histidine biosynthesis; L-histidine from 5-phospho-alpha-D-ribose 1-diphosphate: step 1/9. Functionally, required for the first step of histidine biosynthesis. May allow the feedback regulation of ATP phosphoribosyltransferase activity by histidine. The chain is ATP phosphoribosyltransferase regulatory subunit from Cupriavidus taiwanensis (strain DSM 17343 / BCRC 17206 / CCUG 44338 / CIP 107171 / LMG 19424 / R1) (Ralstonia taiwanensis (strain LMG 19424)).